We begin with the raw amino-acid sequence, 285 residues long: NADH-cytochrome b5 reductase 1 (285 aa).

A helical membrane pass occupies residues 7 to 23 (LATFSVLVLFYKLFTYS). Positions 40-144 (TEFREFELVE…SGPRGFYEYV (105 aa)) constitute an FAD-binding FR-type domain. FAD is bound by residues 124 to 139 (GDMKIGEKINISGPRG) and 150 to 182 (HLAMVAGGTGITPMFQIMKAIARDPSDKTRVTL).

This sequence belongs to the flavoprotein pyridine nucleotide cytochrome reductase family. In terms of assembly, monomer. Component of the 2-(3-amino-3-carboxypropyl)histidine synthase complex composed of DPH1, DPH2, DPH3 and a NADH-dependent reductase, predominantly CBR1. The cofactor is FAD.

The protein resides in the mitochondrion outer membrane. The catalysed reaction is 2 Fe(III)-[cytochrome b5] + NADH = 2 Fe(II)-[cytochrome b5] + NAD(+) + H(+). It carries out the reaction 2 Fe(3+)-[Dph3] + NADH = 2 Fe(2+)-[Dph3] + NAD(+) + H(+). Its pathway is protein modification; peptidyl-diphthamide biosynthesis. NADH-dependent reductase for DPH3 and cytochrome b5. Required for the first step of diphthamide biosynthesis, a post-translational modification of histidine which occurs in elongation factor 2. DPH1 and DPH2 transfer a 3-amino-3-carboxypropyl (ACP) group from S-adenosyl-L-methionine (SAM) to a histidine residue, the reaction is assisted by a reduction system comprising DPH3 and a NADH-dependent reductase, predominantly CBR1. By reducing DPH3, also involved in the formation of the tRNA wobble base modification mcm5s 2U (5-methoxycarbonylmethyl-2-thiouridine), mediated by the elongator complex. The cytochrome b5/NADH cytochrome b5 reductase electron transfer system supports the catalytic activity of several sterol biosynthetic enzymes. This is NADH-cytochrome b5 reductase 1 (CBR1) from Candida glabrata (strain ATCC 2001 / BCRC 20586 / JCM 3761 / NBRC 0622 / NRRL Y-65 / CBS 138) (Yeast).